Reading from the N-terminus, the 101-residue chain is MSTVADPRDIIIAPVVSEKSYGLMEQNVYTFLVHPSSNKTQIKIAVEQIFGVKVASVNTVNREGKRKRTRTGYGQRKATKRAMVTLVAGSDPIDIFGGATA.

Belongs to the universal ribosomal protein uL23 family. Part of the 50S ribosomal subunit. Contacts protein L29, and trigger factor when it is bound to the ribosome.

One of the early assembly proteins it binds 23S rRNA. One of the proteins that surrounds the polypeptide exit tunnel on the outside of the ribosome. Forms the main docking site for trigger factor binding to the ribosome. This chain is Large ribosomal subunit protein uL23, found in Corynebacterium jeikeium (strain K411).